The following is a 220-amino-acid chain: Ribosomal RNA large subunit methyltransferase E (220 aa).

Residues G60, W62, D92, D108, and D133 each contribute to the S-adenosyl-L-methionine site. Catalysis depends on K173, which acts as the Proton acceptor. The segment at 195–220 is disordered; that stretch reads APRKPKASRDKSSETFILGRHLKQPR.

This sequence belongs to the class I-like SAM-binding methyltransferase superfamily. RNA methyltransferase RlmE family.

The protein localises to the cytoplasm. The enzyme catalyses uridine(2552) in 23S rRNA + S-adenosyl-L-methionine = 2'-O-methyluridine(2552) in 23S rRNA + S-adenosyl-L-homocysteine + H(+). In terms of biological role, specifically methylates the uridine in position 2552 of 23S rRNA at the 2'-O position of the ribose in the fully assembled 50S ribosomal subunit. This Burkholderia pseudomallei (strain 1710b) protein is Ribosomal RNA large subunit methyltransferase E.